We begin with the raw amino-acid sequence, 178 residues long: Probable DNA-directed RNA polymerase subunit delta (178 aa).

Residues 14 to 81 (LSLIDVAHFI…GNNTWGLRAW (68 aa)) form the HTH HARE-type domain. 2 disordered regions span residues 88–122 (DEEV…DYDD) and 141–178 (LDED…PEDK). 3 stretches are compositionally biased toward acidic residues: residues 105–122 (DDED…DYDD), 141–150 (LDEDEDDDDH), and 161–178 (TVED…PEDK).

This sequence belongs to the RpoE family. In terms of assembly, RNAP is composed of a core of 2 alpha, a beta and a beta' subunits. The core is associated with a delta subunit and one of several sigma factors.

Its function is as follows. Participates in both the initiation and recycling phases of transcription. In the presence of the delta subunit, RNAP displays an increased specificity of transcription, a decreased affinity for nucleic acids, and an increased efficiency of RNA synthesis because of enhanced recycling. This Listeria monocytogenes serovar 1/2a (strain ATCC BAA-679 / EGD-e) protein is Probable DNA-directed RNA polymerase subunit delta.